A 360-amino-acid polypeptide reads, in one-letter code: Histidinol-phosphate aminotransferase (360 aa).

Lys-223 carries the N6-(pyridoxal phosphate)lysine modification.

Belongs to the class-II pyridoxal-phosphate-dependent aminotransferase family. Histidinol-phosphate aminotransferase subfamily. In terms of assembly, homodimer. Pyridoxal 5'-phosphate is required as a cofactor.

It carries out the reaction L-histidinol phosphate + 2-oxoglutarate = 3-(imidazol-4-yl)-2-oxopropyl phosphate + L-glutamate. It participates in amino-acid biosynthesis; L-histidine biosynthesis; L-histidine from 5-phospho-alpha-D-ribose 1-diphosphate: step 7/9. The protein is Histidinol-phosphate aminotransferase (hisC) of Bacillus subtilis (strain 168).